The following is a 448-amino-acid chain: Asparagine--tRNA ligase (448 aa).

This sequence belongs to the class-II aminoacyl-tRNA synthetase family. In terms of assembly, homodimer.

It is found in the cytoplasm. The catalysed reaction is tRNA(Asn) + L-asparagine + ATP = L-asparaginyl-tRNA(Asn) + AMP + diphosphate + H(+). The protein is Asparagine--tRNA ligase of Streptococcus pyogenes serotype M12 (strain MGAS9429).